Consider the following 390-residue polypeptide: Prostaglandin E2 receptor EP3 subtype (390 aa).

Residues 1–53 (MKETRGYGGDAPFCTRLNHSYTGMWAPERSAEARGNLTRPPGSGEDCGSVSVA) are Extracellular-facing. N-linked (GlcNAc...) asparagine glycosylation is found at Asn18 and Asn36. A helical membrane pass occupies residues 54 to 78 (FPITMLLTGFVGNALAMLLVSRSYR). The Cytoplasmic portion of the chain corresponds to 79 to 91 (RRESKRKKSFLLC). Residues 92-112 (IGWLALTDLVGQLLTTPVVIV) form a helical membrane-spanning segment. Over 113–131 (VYLSKQRWEHIDPSGRLCT) the chain is Extracellular. A helical membrane pass occupies residues 132 to 153 (FFGLTMTVFGLSSLFIASAMAV). Residues 154–175 (ERALAIRAPHWYASHMKTRATR) lie on the Cytoplasmic side of the membrane. The chain crosses the membrane as a helical span at residues 176–197 (AVLLGVWLAVLAFALLPVLGVG). Over 198–227 (QYTVQWPGTWCFISTGRGGNGTSSSHNWGN) the chain is Extracellular. The chain crosses the membrane as a helical span at residues 228 to 253 (LFFASAFAFLGLLALTVTFSCNLATI). Residues 254–283 (KALVSRCRAKATASQSSAQWGRITTETAIQ) are Cytoplasmic-facing. Residues 284–307 (LMGIMCVLSVCWSPLLIMMLKMIF) traverse the membrane as a helical segment. At 308–327 (NQTSVEHCKTHTEKQKECNF) the chain is on the extracellular side. The helical transmembrane segment at 328 to 349 (FLIAVRLASLNQILDPWVYLLL) threads the bilayer. Residues 350–390 (RKILLRKFCQIRYHTNNYASSSTSLPCQCSSTLMWSDHLER) are Cytoplasmic-facing.

The protein belongs to the G-protein coupled receptor 1 family. As to quaternary structure, interacts (via C-terminus) with MKLN1. Detected in kidney. Expressed in small intestine, heart, pancreas, gastric fundic mucosa, mammary artery and pulmonary vessels.

Its subcellular location is the cell membrane. Receptor for prostaglandin E2 (PGE2). The activity of this receptor can couple to both the inhibition of adenylate cyclase mediated by G(i) proteins, and to an elevation of intracellular calcium. Required for normal development of fever in response to pyrinogens, including IL1B, prostaglandin E2 and bacterial lipopolysaccharide (LPS). Required for normal potentiation of platelet aggregation by prostaglandin E2, and thus plays a role in the regulation of blood coagulation. Required for increased HCO3(-) secretion in the duodenum in response to mucosal acidification, and thereby contributes to the protection of the mucosa against acid-induced ulceration. Not required for normal kidney function, normal urine volume and osmolality. This Homo sapiens (Human) protein is Prostaglandin E2 receptor EP3 subtype (PTGER3).